A 425-amino-acid polypeptide reads, in one-letter code: Amidase 1 (425 aa).

An N-acetylalanine modification is found at A2. Catalysis depends on charge relay system residues K36 and S113. The Acyl-ester intermediate role is filled by S137.

Belongs to the amidase family. As to expression, expressed in cotyledons, leaves and flower buds. Lower levels in roots, stems and siliques.

It localises to the cytoplasm. The protein resides in the nucleus. The protein localises to the nucleoplasm. It catalyses the reaction a monocarboxylic acid amide + H2O = a monocarboxylate + NH4(+). The enzyme catalyses indole-3-acetamide + H2O = (indol-3-yl)acetate + NH4(+). The catalysed reaction is 2-phenylacetamide + H2O = 2-phenylacetate + NH4(+). It carries out the reaction L-asparagine + H2O = L-aspartate + NH4(+). It catalyses the reaction 1-naphthaleneacetamide + H2O = 1-naphthaleneacetate + NH4(+). Its activity is regulated as follows. Inhibited by phenylmethylsulfonyl fluoride (PMSF). Its function is as follows. Amidase involved in auxin biosynthesis. Converts indole-3-acetamide to indole-3-acetate. Converts phenyl-2-acetamide (PAM) to phenyl-2-acetate. Substrate preference is PAM &gt; IAM. Can also use L-asparagine and 1-naphtalene-acetamide as substrates, but not indole-3-acetonitrile or indole-3-acetyl-L-aspartic acid. This chain is Amidase 1, found in Arabidopsis thaliana (Mouse-ear cress).